We begin with the raw amino-acid sequence, 51 residues long: Large ribosomal subunit protein eL39 (51 aa).

The protein belongs to the eukaryotic ribosomal protein eL39 family.

This chain is Large ribosomal subunit protein eL39 (rpl39e), found in Pyrobaculum aerophilum (strain ATCC 51768 / DSM 7523 / JCM 9630 / CIP 104966 / NBRC 100827 / IM2).